A 481-amino-acid chain; its full sequence is Probable glycine dehydrogenase (decarboxylating) subunit 2 (481 aa).

Lys265 is modified (N6-(pyridoxal phosphate)lysine).

This sequence belongs to the GcvP family. C-terminal subunit subfamily. In terms of assembly, the glycine cleavage system is composed of four proteins: P, T, L and H. In this organism, the P 'protein' is a heterodimer of two subunits. The cofactor is pyridoxal 5'-phosphate.

The catalysed reaction is N(6)-[(R)-lipoyl]-L-lysyl-[glycine-cleavage complex H protein] + glycine + H(+) = N(6)-[(R)-S(8)-aminomethyldihydrolipoyl]-L-lysyl-[glycine-cleavage complex H protein] + CO2. The glycine cleavage system catalyzes the degradation of glycine. The P protein binds the alpha-amino group of glycine through its pyridoxal phosphate cofactor; CO(2) is released and the remaining methylamine moiety is then transferred to the lipoamide cofactor of the H protein. The protein is Probable glycine dehydrogenase (decarboxylating) subunit 2 of Thermosipho melanesiensis (strain DSM 12029 / CIP 104789 / BI429).